The following is a 1330-amino-acid chain: ESX-3 secretion system protein EccC3 (1330 aa).

2 helical membrane passes run 43–63 (LPYL…ATGM) and 65–85 (VISP…TALY). 3 FtsK domains span residues 456–662 (GEPL…SVSR), 811–1000 (RDPL…RDSN), and 1090–1280 (LAPV…ADSG). Residues 479–486 (GMTGSGKS), 829–836 (GGPKSGKS), and 1107–1114 (GDARSGKT) each bind ATP.

Part of the ESX-3 / type VII secretion system (T7SS), which is composed of cytosolic and membrane components. The ESX-3 membrane complex is composed of EccB3, EccC3, EccD3 and EccE3.

Its subcellular location is the cell inner membrane. Part of the ESX-3 specialized secretion system, which is important for iron and zinc uptake or homeostasis. The protein is ESX-3 secretion system protein EccC3 of Mycobacterium tuberculosis (strain CDC 1551 / Oshkosh).